The primary structure comprises 126 residues: Small ribosomal subunit protein uS12 (126 aa).

The disordered stretch occupies residues 1-28 (MPTINQLVRKGRQSETTKSKSPALQDCP). Aspartate 89 is subject to 3-methylthioaspartic acid. The segment at 103–126 (DTQGVKDRKQARSKYGAKRAKAAK) is disordered. Residues 113 to 126 (ARSKYGAKRAKAAK) show a composition bias toward basic residues.

It belongs to the universal ribosomal protein uS12 family. Part of the 30S ribosomal subunit. Contacts proteins S8 and S17. May interact with IF1 in the 30S initiation complex.

With S4 and S5 plays an important role in translational accuracy. Functionally, interacts with and stabilizes bases of the 16S rRNA that are involved in tRNA selection in the A site and with the mRNA backbone. Located at the interface of the 30S and 50S subunits, it traverses the body of the 30S subunit contacting proteins on the other side and probably holding the rRNA structure together. The combined cluster of proteins S8, S12 and S17 appears to hold together the shoulder and platform of the 30S subunit. The protein is Small ribosomal subunit protein uS12 of Burkholderia orbicola (strain MC0-3).